The chain runs to 460 residues: Glycine--tRNA ligase (460 aa).

2 residues coordinate substrate: R98 and E172. Residues 204-206 (RNE), 214-219 (FRTREF), 288-289 (EL), and 332-335 (GADR) contribute to the ATP site. 219–223 (FEQME) serves as a coordination point for substrate. 328–332 (EPSLG) contributes to the substrate binding site.

Belongs to the class-II aminoacyl-tRNA synthetase family. In terms of assembly, homodimer.

It localises to the cytoplasm. It carries out the reaction tRNA(Gly) + glycine + ATP = glycyl-tRNA(Gly) + AMP + diphosphate. Its function is as follows. Catalyzes the attachment of glycine to tRNA(Gly). The protein is Glycine--tRNA ligase of Geobacillus kaustophilus (strain HTA426).